Consider the following 41-residue polypeptide: LICYNTPFKDISKTCAEGENLCYYGKKDAVWNLYPIRGCAD.

Intrachain disulfides connect Cys3–Cys22 and Cys15–Cys39.

This sequence belongs to the three-finger toxin family. Short-chain subfamily. As to expression, expressed by the venom gland.

Its subcellular location is the secreted. In Calliophis bivirgatus (Blue Malaysian coral snake), this protein is Maticotoxin A.